The sequence spans 355 residues: UDP-N-acetylglucosamine--N-acetylmuramyl-(pentapeptide) pyrophosphoryl-undecaprenol N-acetylglucosamine transferase (355 aa).

UDP-N-acetyl-alpha-D-glucosamine contacts are provided by residues 12–14 (TGG), Asn-124, Arg-160, Ser-192, Ile-243, 262–267 (ALTVCE), and Gln-287.

It belongs to the glycosyltransferase 28 family. MurG subfamily.

It localises to the cell inner membrane. The enzyme catalyses di-trans,octa-cis-undecaprenyl diphospho-N-acetyl-alpha-D-muramoyl-L-alanyl-D-glutamyl-meso-2,6-diaminopimeloyl-D-alanyl-D-alanine + UDP-N-acetyl-alpha-D-glucosamine = di-trans,octa-cis-undecaprenyl diphospho-[N-acetyl-alpha-D-glucosaminyl-(1-&gt;4)]-N-acetyl-alpha-D-muramoyl-L-alanyl-D-glutamyl-meso-2,6-diaminopimeloyl-D-alanyl-D-alanine + UDP + H(+). Its pathway is cell wall biogenesis; peptidoglycan biosynthesis. In terms of biological role, cell wall formation. Catalyzes the transfer of a GlcNAc subunit on undecaprenyl-pyrophosphoryl-MurNAc-pentapeptide (lipid intermediate I) to form undecaprenyl-pyrophosphoryl-MurNAc-(pentapeptide)GlcNAc (lipid intermediate II). The protein is UDP-N-acetylglucosamine--N-acetylmuramyl-(pentapeptide) pyrophosphoryl-undecaprenol N-acetylglucosamine transferase of Haemophilus ducreyi (strain 35000HP / ATCC 700724).